Consider the following 342-residue polypeptide: Ribosomal RNA small subunit methyltransferase C (342 aa).

The protein belongs to the methyltransferase superfamily. RsmC family. In terms of assembly, monomer.

Its subcellular location is the cytoplasm. The catalysed reaction is guanosine(1207) in 16S rRNA + S-adenosyl-L-methionine = N(2)-methylguanosine(1207) in 16S rRNA + S-adenosyl-L-homocysteine + H(+). Specifically methylates the guanine in position 1207 of 16S rRNA in the 30S particle. The chain is Ribosomal RNA small subunit methyltransferase C from Salmonella heidelberg (strain SL476).